A 100-amino-acid polypeptide reads, in one-letter code: Acylphosphatase (100 aa).

Residues 3 to 92 (RRSYSVIGRV…PLPDTFDIRF (90 aa)) form the Acylphosphatase-like domain. Active-site residues include R18 and N36. Residues 76–100 (DDPAHEGPLPDTFDIRFRAPGSASE) are disordered.

Belongs to the acylphosphatase family.

The enzyme catalyses an acyl phosphate + H2O = a carboxylate + phosphate + H(+). This is Acylphosphatase (acyP) from Nitratidesulfovibrio vulgaris (strain ATCC 29579 / DSM 644 / CCUG 34227 / NCIMB 8303 / VKM B-1760 / Hildenborough) (Desulfovibrio vulgaris).